An 820-amino-acid chain; its full sequence is Quinate repressor protein (820 aa).

The tract at residues 25–79 (SFEQMLLQQDSNESSRRTSPSRTHSRVDLERHSSHIVSLSSSNGSPSLEDPENRL) is disordered. Residues 59–71 (HIVSLSSSNGSPS) show a composition bias toward low complexity.

It in the N-terminal section; belongs to the shikimate kinase family. This sequence in the 2nd section; belongs to the type-I 3-dehydroquinase family. The protein in the C-terminal section; belongs to the shikimate dehydrogenase family. Interacts with qutA; transcriptional activator of the quinate utilization pathway genes.

Functionally, multi-domain repressor protein that negatively regulates transcription of the quinate utilization pathway genes. May mediate its repressor activity by binding directly to the qutA activator protein. This chain is Quinate repressor protein (qutR), found in Talaromyces stipitatus (strain ATCC 10500 / CBS 375.48 / QM 6759 / NRRL 1006) (Penicillium stipitatum).